The chain runs to 152 residues: Sulfur-rich protein (152 aa).

Positions 1–11 (MSTTPIVSGVT) are enriched in polar residues. Positions 1–21 (MSTTPIVSGVTSQNNSSENVS) are disordered. Residues 12–21 (SQNNSSENVS) are compositionally biased toward low complexity. The next 2 membrane-spanning stretches (helical) occupy residues 44–64 (VGLA…LFIL) and 73–93 (IYLA…ILSM).

Its subcellular location is the membrane. The protein is Sulfur-rich protein (srp) of Chlamydia muridarum (strain MoPn / Nigg).